We begin with the raw amino-acid sequence, 143 residues long: Large ribosomal subunit protein uL13 (143 aa).

It belongs to the universal ribosomal protein uL13 family. Part of the 50S ribosomal subunit.

This protein is one of the early assembly proteins of the 50S ribosomal subunit, although it is not seen to bind rRNA by itself. It is important during the early stages of 50S assembly. The protein is Large ribosomal subunit protein uL13 of Prochlorococcus marinus (strain MIT 9301).